Consider the following 406-residue polypeptide: Dual-specificity RNA methyltransferase RlmN (406 aa).

The active-site Proton acceptor is the Glu-119. A Radical SAM core domain is found at 125–370 (DKGRGTLCVS…AMVRRTRGDD (246 aa)). A disulfide bond links Cys-132 and Cys-375. [4Fe-4S] cluster contacts are provided by Cys-139, Cys-143, and Cys-146. Residues 192 to 193 (GE), Ser-224, 246 to 248 (SLH), and Asn-332 contribute to the S-adenosyl-L-methionine site. Residue Cys-375 is the S-methylcysteine intermediate of the active site.

The protein belongs to the radical SAM superfamily. RlmN family. [4Fe-4S] cluster serves as cofactor.

Its subcellular location is the cytoplasm. The catalysed reaction is adenosine(2503) in 23S rRNA + 2 reduced [2Fe-2S]-[ferredoxin] + 2 S-adenosyl-L-methionine = 2-methyladenosine(2503) in 23S rRNA + 5'-deoxyadenosine + L-methionine + 2 oxidized [2Fe-2S]-[ferredoxin] + S-adenosyl-L-homocysteine. It catalyses the reaction adenosine(37) in tRNA + 2 reduced [2Fe-2S]-[ferredoxin] + 2 S-adenosyl-L-methionine = 2-methyladenosine(37) in tRNA + 5'-deoxyadenosine + L-methionine + 2 oxidized [2Fe-2S]-[ferredoxin] + S-adenosyl-L-homocysteine. Functionally, specifically methylates position 2 of adenine 2503 in 23S rRNA and position 2 of adenine 37 in tRNAs. m2A2503 modification seems to play a crucial role in the proofreading step occurring at the peptidyl transferase center and thus would serve to optimize ribosomal fidelity. This Xylella fastidiosa (strain Temecula1 / ATCC 700964) protein is Dual-specificity RNA methyltransferase RlmN.